Here is a 611-residue protein sequence, read N- to C-terminus: Threonine--tRNA ligase (611 aa).

Residues 1 to 27 form a disordered region; sequence MAGPEPEPVSSAAATTPAPSAPVVLPK. The segment covering 8–24 has biased composition (low complexity); that stretch reads PVSSAAATTPAPSAPVV. The tract at residues 209-502 is catalytic; that stretch reads DHRRIGKDLD…MTENYAGDYP (294 aa). Positions 302, 353, and 479 each coordinate Zn(2+).

Belongs to the class-II aminoacyl-tRNA synthetase family. In terms of assembly, homodimer. Requires Zn(2+) as cofactor.

It is found in the cytoplasm. The enzyme catalyses tRNA(Thr) + L-threonine + ATP = L-threonyl-tRNA(Thr) + AMP + diphosphate + H(+). In terms of biological role, catalyzes the attachment of threonine to tRNA(Thr) in a two-step reaction: L-threonine is first activated by ATP to form Thr-AMP and then transferred to the acceptor end of tRNA(Thr). Also edits incorrectly charged L-seryl-tRNA(Thr). The protein is Threonine--tRNA ligase of Synechococcus sp. (strain CC9605).